Here is a 305-residue protein sequence, read N- to C-terminus: Putative S-adenosyl-L-methionine-dependent methyltransferase MAB_3787 (305 aa).

Residues D132 and 161 to 162 each bind S-adenosyl-L-methionine; that span reads DL.

Belongs to the UPF0677 family.

Exhibits S-adenosyl-L-methionine-dependent methyltransferase activity. The protein is Putative S-adenosyl-L-methionine-dependent methyltransferase MAB_3787 of Mycobacteroides abscessus (strain ATCC 19977 / DSM 44196 / CCUG 20993 / CIP 104536 / JCM 13569 / NCTC 13031 / TMC 1543 / L948) (Mycobacterium abscessus).